The chain runs to 277 residues: Phosphate import ATP-binding protein PstB 2 (277 aa).

An ABC transporter domain is found at Ile31–Ile272. Residue Gly63–Ser70 coordinates ATP.

Belongs to the ABC transporter superfamily. Phosphate importer (TC 3.A.1.7) family. The complex is composed of two ATP-binding proteins (PstB), two transmembrane proteins (PstC and PstA) and a solute-binding protein (PstS).

It is found in the cell inner membrane. It catalyses the reaction phosphate(out) + ATP + H2O = ADP + 2 phosphate(in) + H(+). Part of the ABC transporter complex PstSACB involved in phosphate import. Responsible for energy coupling to the transport system. In Pseudomonas syringae pv. tomato (strain ATCC BAA-871 / DC3000), this protein is Phosphate import ATP-binding protein PstB 2.